Consider the following 781-residue polypeptide: DNA translocase FtsK 2 (781 aa).

Transmembrane regions (helical) follow at residues 24–44 (LLGE…LTIL), 74–94 (FADV…LLLL), 120–140 (AGVT…LEAI), and 170–190 (GFTG…SLFF). The Cytoplasmic portion of the chain corresponds to 191–781 (HFSWLNLAEQ…NRNGNVVEEE (591 aa)). In terms of domain architecture, FtsK spans 414-623 (GKPVVADLAK…FQVSSKIDSR (210 aa)). 434–439 (GSGKSV) is a binding site for ATP.

The protein belongs to the FtsK/SpoIIIE/SftA family. In terms of assembly, homohexamer. Forms a ring that surrounds DNA.

The protein resides in the cell inner membrane. Its function is as follows. Essential cell division protein that coordinates cell division and chromosome segregation. The N-terminus is involved in assembly of the cell-division machinery. The C-terminus functions as a DNA motor that moves dsDNA in an ATP-dependent manner towards the dif recombination site, which is located within the replication terminus region. Translocation stops specifically at Xer-dif sites, where FtsK interacts with the Xer recombinase, allowing activation of chromosome unlinking by recombination. FtsK orienting polar sequences (KOPS) guide the direction of DNA translocation. FtsK can remove proteins from DNA as it translocates, but translocation stops specifically at XerCD-dif site, thereby preventing removal of XerC and XerD from dif. This Ralstonia nicotianae (strain ATCC BAA-1114 / GMI1000) (Ralstonia solanacearum) protein is DNA translocase FtsK 2 (ftsK2).